A 108-amino-acid polypeptide reads, in one-letter code: MEQFECITVEEAYQKLHQGAAVLVDIRDPQSYAMGHAPQAFHLTNDTLGAFMREYDFDTAVMVMCYHGNSSKGAAQYLLQQGYDAVYSIDGGFEAWHRHFPADVANGA.

Residues His17–Ala105 form the Rhodanese domain. Cys65 acts as the Cysteine persulfide intermediate in catalysis.

Belongs to the GlpE family.

Its subcellular location is the cytoplasm. It carries out the reaction thiosulfate + hydrogen cyanide = thiocyanate + sulfite + 2 H(+). The catalysed reaction is thiosulfate + [thioredoxin]-dithiol = [thioredoxin]-disulfide + hydrogen sulfide + sulfite + 2 H(+). Its function is as follows. Transferase that catalyzes the transfer of sulfur from thiosulfate to thiophilic acceptors such as cyanide or dithiols. May function in a CysM-independent thiosulfate assimilation pathway by catalyzing the conversion of thiosulfate to sulfite, which can then be used for L-cysteine biosynthesis. The sequence is that of Thiosulfate sulfurtransferase GlpE from Salmonella arizonae (strain ATCC BAA-731 / CDC346-86 / RSK2980).